The following is a 653-amino-acid chain: Intermembrane lipid transfer protein vps13l (653 aa).

The segment at 5–49 adopts a B box-type zinc-finger fold; that stretch reads ISELKCQQHDKLVTIYCCACDAYFCKKCDKEKHSQDDNQEDSLHI. Zn(2+) is bound by residues cysteine 10, histidine 13, cysteine 32, and histidine 37. Disordered stretches follow at residues 159-232, 248-420, and 627-653; these read NLID…NRKK, HILN…EDDS, and EKSN…PNEN. A compositionally biased stretch (low complexity) spans 195-213; it reads SPSPSRSSESNSTTNNNNN. A compositionally biased stretch (acidic residues) spans 266 to 277; the sequence is DYDDDDDNDDDN. Residues 278–293 show a composition bias toward low complexity; that stretch reads NNNNNNNNNNNNNNNN. The span at 314–330 shows a compositional bias: basic and acidic residues; it reads ETEKEIENVENKIDNKP. Over residues 366-381 the composition is skewed to acidic residues; the sequence is IFEEEEEEEEDEDEVG.

Belongs to the VPS13 family.

The protein localises to the membrane. Its function is as follows. Mediates the transfer of lipids between membranes at organelle contact sites. This is Intermembrane lipid transfer protein vps13l (vps13l) from Dictyostelium discoideum (Social amoeba).